Reading from the N-terminus, the 256-residue chain is Small ribosomal subunit protein eS1 (256 aa).

Position 2 is an N-acetylalanine; partial (Ala-2).

The protein belongs to the eukaryotic ribosomal protein eS1 family. In terms of assembly, component of the small ribosomal subunit. Mature ribosomes consist of a small (40S) and a large (60S) subunit. The 40S subunit contains about 33 different proteins and 1 molecule of RNA (18S). The 60S subunit contains about 49 different proteins and 3 molecules of RNA (25S, 5.8S and 5S).

It localises to the cytoplasm. In Candida albicans (strain SC5314 / ATCC MYA-2876) (Yeast), this protein is Small ribosomal subunit protein eS1.